Consider the following 582-residue polypeptide: Trans-activating transcriptional regulatory protein (582 aa).

A disordered region spans residues 101–131 (QPVVEQPSPSSAYHAESFEHSAGVNQPSATG).

The protein belongs to the nucleopolyhedrovirus IE-1 protein family. Homodimer. Interacts with helicase and LEF-3. In terms of processing, phosphorylated.

The protein resides in the host nucleus. Functionally, regulatory transcriptional protein, which trans-activates gene expression from early baculovirus promoters. Can also trans-activate its own promoter, suggesting an autoregulation during infection of host cells. Also promotes viral DNA genome replication via the N-terminal region. The sequence is that of Trans-activating transcriptional regulatory protein (IE1) from Autographa californica nuclear polyhedrosis virus (AcMNPV).